The chain runs to 188 residues: Phospholipase A2 inhibitor 31 kDa subunit (188 aa).

8 disulfide bridges follow: C3–C27, C6–C13, C20–C48, C54–C75, C76–C81, C99–C124, C117–C146, and C150–C172. The N-linked (GlcNAc...) asparagine glycan is linked to N157.

It belongs to the CNF-like-inhibitor family. Heterodimer with phospholipase A2 inhibitor 25 kDa. In terms of processing, N-glycosylated. In terms of tissue distribution, expressed by the liver.

It is found in the secreted. Functionally, inhibits the enzymatic activity of phospholipase A2. The polypeptide is Phospholipase A2 inhibitor 31 kDa subunit (Naja kaouthia (Monocled cobra)).